A 315-amino-acid polypeptide reads, in one-letter code: Uracil-DNA glycosylase (315 aa).

The segment covering 35-80 (AAAAAPAGAGAGASKPARPPAAARPAKGTPAASAATTATGADASAP) has biased composition (low complexity). A disordered region spans residues 35–88 (AAAAAPAGAGAGASKPARPPAAARPAKGTPAASAATTATGADASAPAPDPGAPT). The Proton acceptor role is filled by aspartate 158.

It belongs to the uracil-DNA glycosylase (UDG) superfamily. UNG family.

It is found in the host nucleus. The catalysed reaction is Hydrolyzes single-stranded DNA or mismatched double-stranded DNA and polynucleotides, releasing free uracil.. Functionally, excises uracil residues from the DNA which can arise as a result of misincorporation of dUMP residues by DNA polymerase or deamination of cytosines. Therefore may reduce deleterious uracil incorporation into the viral genome, particularly in terminally differentiated cells which lack DNA repair enzymes. The chain is Uracil-DNA glycosylase (UL2) from Suid herpesvirus 1 (strain Indiana-Funkhauser / Becker) (SuHV-1).